Reading from the N-terminus, the 141-residue chain is Large ribosomal subunit protein uL13 (141 aa).

This sequence belongs to the universal ribosomal protein uL13 family. Part of the 50S ribosomal subunit.

This protein is one of the early assembly proteins of the 50S ribosomal subunit, although it is not seen to bind rRNA by itself. It is important during the early stages of 50S assembly. The chain is Large ribosomal subunit protein uL13 from Helicobacter acinonychis (strain Sheeba).